Consider the following 304-residue polypeptide: uncharacterized protein (304 aa).

Active-site charge relay system residues include Thr-58 and Tyr-121. Tyr-147 acts as the Proton donor in catalysis. Lys-175 serves as the catalytic Schiff-base intermediate with substrate.

This sequence belongs to the DapA family. Homotetramer.

It localises to the cytoplasm. This is an uncharacterized protein from Halobacterium salinarum (strain ATCC 29341 / DSM 671 / R1).